We begin with the raw amino-acid sequence, 290 residues long: Arylamine N-acetyltransferase 1 (290 aa).

Methionine 1 carries the N-acetylmethionine modification. Catalysis depends on cysteine 68, which acts as the Acyl-thioester intermediate. Serine 103 contributes to the CoA binding site. Valine 106–histidine 107 serves as a coordination point for substrate. Residues histidine 107 and aspartate 122 contribute to the active site. A CoA-binding site is contributed by tyrosine 208.

Belongs to the arylamine N-acetyltransferase family.

The protein localises to the cytoplasm. It catalyses the reaction an arylamine + acetyl-CoA = an N-acetylarylamine + CoA. Participates in the detoxification of a plethora of hydrazine and arylamine drugs. Isoniazid, 2-aminofluorene and anisidine are preferred substrates for NAT-1. No activity with p-aminobenzoic acid (PABA) nor SMZ. The polypeptide is Arylamine N-acetyltransferase 1 (Nat1) (Mus musculus (Mouse)).